We begin with the raw amino-acid sequence, 196 residues long: FMN-dependent NADH:quinone oxidoreductase (196 aa).

FMN is bound by residues Ser10 and 17 to 19 (SYS).

Belongs to the azoreductase type 1 family. In terms of assembly, homodimer. Requires FMN as cofactor.

It carries out the reaction 2 a quinone + NADH + H(+) = 2 a 1,4-benzosemiquinone + NAD(+). The enzyme catalyses N,N-dimethyl-1,4-phenylenediamine + anthranilate + 2 NAD(+) = 2-(4-dimethylaminophenyl)diazenylbenzoate + 2 NADH + 2 H(+). Its function is as follows. Quinone reductase that provides resistance to thiol-specific stress caused by electrophilic quinones. Functionally, also exhibits azoreductase activity. Catalyzes the reductive cleavage of the azo bond in aromatic azo compounds to the corresponding amines. The chain is FMN-dependent NADH:quinone oxidoreductase from Metamycoplasma arthritidis (strain 158L3-1) (Mycoplasma arthritidis).